The primary structure comprises 158 residues: NAD(P)H-quinone oxidoreductase subunit J, chloroplastic (158 aa).

The protein belongs to the complex I 30 kDa subunit family. In terms of assembly, NDH is composed of at least 16 different subunits, 5 of which are encoded in the nucleus.

Its subcellular location is the plastid. It localises to the chloroplast thylakoid membrane. It catalyses the reaction a plastoquinone + NADH + (n+1) H(+)(in) = a plastoquinol + NAD(+) + n H(+)(out). It carries out the reaction a plastoquinone + NADPH + (n+1) H(+)(in) = a plastoquinol + NADP(+) + n H(+)(out). In terms of biological role, NDH shuttles electrons from NAD(P)H:plastoquinone, via FMN and iron-sulfur (Fe-S) centers, to quinones in the photosynthetic chain and possibly in a chloroplast respiratory chain. The immediate electron acceptor for the enzyme in this species is believed to be plastoquinone. Couples the redox reaction to proton translocation, and thus conserves the redox energy in a proton gradient. The protein is NAD(P)H-quinone oxidoreductase subunit J, chloroplastic of Capsella bursa-pastoris (Shepherd's purse).